A 429-amino-acid polypeptide reads, in one-letter code: GTPase Obg (429 aa).

An Obg domain is found at 1–158 (MFADSAKIFI…LNVTLELKVI (158 aa)). The region spanning 159 to 333 (ADVGLVGFPN…LLYYVSDLLK (175 aa)) is the OBG-type G domain. GTP contacts are provided by residues 165 to 172 (GFPNVGKS), 190 to 194 (FTTLN), 212 to 215 (DIPG), 282 to 285 (NKTD), and 314 to 316 (SAV). Residues Ser-172 and Thr-192 each coordinate Mg(2+). The OCT domain occupies 350–429 (ENLVMSEPYT…MYGLEFDYYK (80 aa)).

The protein belongs to the TRAFAC class OBG-HflX-like GTPase superfamily. OBG GTPase family. Monomer. It depends on Mg(2+) as a cofactor.

It localises to the cytoplasm. Its function is as follows. An essential GTPase which binds GTP, GDP and possibly (p)ppGpp with moderate affinity, with high nucleotide exchange rates and a fairly low GTP hydrolysis rate. Plays a role in control of the cell cycle, stress response, ribosome biogenesis and in those bacteria that undergo differentiation, in morphogenesis control. The polypeptide is GTPase Obg (Lachnoclostridium phytofermentans (strain ATCC 700394 / DSM 18823 / ISDg) (Clostridium phytofermentans)).